The primary structure comprises 378 residues: MTNIRKPPLLKIVNHSFIDLPAPSNISAWWNFGSLLGLCLVIQILTGLFLAMHYTSDTMTAFSSVTHICRDVNYGWLIRYMHANGASMFFICLFLHVGRGLYYGSYTYFETWNIGVILLFAVMATAFMGYVLPWGQMSFWGATVITNLLSAIPYIGTTLVEWIWGGFSVDKATLTRFFAFHFILPFIVAALVMVHLLFLHETGSNNPSGLISDSDKIPFHPYYTIKDALGIFLLLLLFMTLVLFFPDLLGDPDNYTPANPLNTPPHIKPEWYFLFAYAILRSIPNKLGGVLALIFSILILMMFPILHVSKQRSMMFRPLSQCLFWILVADLFTLTWIGGQPVEHPFITIGQVASIIYFVIILFALPIISMLENKLLKW.

A run of 4 helical transmembrane segments spans residues 32-52 (FGSL…FLAM), 76-97 (WLIR…FLHV), 112-132 (WNIG…GYVL), and 177-197 (FFAF…VHLL). Residues His82 and His96 each contribute to the heme b site. Heme b-binding residues include His181 and His195. His200 contacts a ubiquinone. The next 4 membrane-spanning stretches (helical) occupy residues 225 to 245 (IKDA…VLFF), 287 to 307 (LGGV…PILH), 319 to 339 (LSQC…WIGG), and 346 to 366 (FITI…FALP).

The protein belongs to the cytochrome b family. In terms of assembly, the cytochrome bc1 complex contains 11 subunits: 3 respiratory subunits (MT-CYB, CYC1 and UQCRFS1), 2 core proteins (UQCRC1 and UQCRC2) and 6 low-molecular weight proteins (UQCRH/QCR6, UQCRB/QCR7, UQCRQ/QCR8, UQCR10/QCR9, UQCR11/QCR10 and a cleavage product of UQCRFS1). This cytochrome bc1 complex then forms a dimer. Heme b serves as cofactor.

The protein resides in the mitochondrion inner membrane. In terms of biological role, component of the ubiquinol-cytochrome c reductase complex (complex III or cytochrome b-c1 complex) that is part of the mitochondrial respiratory chain. The b-c1 complex mediates electron transfer from ubiquinol to cytochrome c. Contributes to the generation of a proton gradient across the mitochondrial membrane that is then used for ATP synthesis. The polypeptide is Cytochrome b (MT-CYB) (Sciurus aberti (Abert's squirrel)).